A 236-amino-acid polypeptide reads, in one-letter code: Small ribosomal subunit protein uS2c (236 aa).

It belongs to the universal ribosomal protein uS2 family.

The protein localises to the plastid. Its subcellular location is the chloroplast. This chain is Small ribosomal subunit protein uS2c (rps2), found in Guizotia abyssinica (Niger).